Consider the following 118-residue polypeptide: Large ribosomal subunit protein bL20 (118 aa).

This sequence belongs to the bacterial ribosomal protein bL20 family.

Functionally, binds directly to 23S ribosomal RNA and is necessary for the in vitro assembly process of the 50S ribosomal subunit. It is not involved in the protein synthesizing functions of that subunit. This Synechococcus sp. (strain JA-2-3B'a(2-13)) (Cyanobacteria bacterium Yellowstone B-Prime) protein is Large ribosomal subunit protein bL20.